The primary structure comprises 228 residues: uncharacterized protein (228 aa).

Positions 1 to 19 are cleaved as a signal peptide; the sequence is MYRYTWLLWWITILLRIQQ. 5 N-linked (GlcNAc...) asparagine; by host glycosylation sites follow: asparagine 41, asparagine 93, asparagine 100, asparagine 128, and asparagine 164. A helical membrane pass occupies residues 189-209; it reads MWIIPLVIVTTIIVLICFKFP.

The protein belongs to the HHV-5 UL9 family.

It localises to the host membrane. This is an uncharacterized protein from Homo sapiens (Human).